The chain runs to 265 residues: Thiazole synthase (265 aa).

The Schiff-base intermediate with DXP role is filled by K107. Residues G168, 194-195 (AG), and 216-217 (NT) each bind 1-deoxy-D-xylulose 5-phosphate.

Belongs to the ThiG family. Homotetramer. Forms heterodimers with either ThiH or ThiS.

Its subcellular location is the cytoplasm. The catalysed reaction is [ThiS sulfur-carrier protein]-C-terminal-Gly-aminoethanethioate + 2-iminoacetate + 1-deoxy-D-xylulose 5-phosphate = [ThiS sulfur-carrier protein]-C-terminal Gly-Gly + 2-[(2R,5Z)-2-carboxy-4-methylthiazol-5(2H)-ylidene]ethyl phosphate + 2 H2O + H(+). It functions in the pathway cofactor biosynthesis; thiamine diphosphate biosynthesis. In terms of biological role, catalyzes the rearrangement of 1-deoxy-D-xylulose 5-phosphate (DXP) to produce the thiazole phosphate moiety of thiamine. Sulfur is provided by the thiocarboxylate moiety of the carrier protein ThiS. In vitro, sulfur can be provided by H(2)S. The polypeptide is Thiazole synthase (Pseudomonas paraeruginosa (strain DSM 24068 / PA7) (Pseudomonas aeruginosa (strain PA7))).